A 152-amino-acid polypeptide reads, in one-letter code: MMELMVVHPHIFWLSLGGLLLAAEMLGGNGYLLWSGVAAVITGLVVWLVPLGWEWQGVMFAILTLLAAWLWWKWLSRRVREQKHSDSHLNQRGQQLIGRRFVLESPLVNGRGHMRVGDSSWPVSASEDLGAGTHVEVIAIEGITLHIRAVSS.

A helical transmembrane segment spans residues 1 to 21 (MMELMVVHPHIFWLSLGGLLL). The Cytoplasmic segment spans residues 22 to 31 (AAEMLGGNGY). A helical membrane pass occupies residues 32 to 52 (LLWSGVAAVITGLVVWLVPLG). Residues 53–54 (WE) lie on the Periplasmic side of the membrane. The helical transmembrane segment at 55 to 75 (WQGVMFAILTLLAAWLWWKWL) threads the bilayer. At 76 to 152 (SRRVREQKHS…ITLHIRAVSS (77 aa)) the chain is on the cytoplasmic side.

This sequence to M.jannaschii MJ0826.

It localises to the cell inner membrane. This chain is Inner membrane protein YbbJ (ybbJ), found in Escherichia coli (strain K12).